Reading from the N-terminus, the 154-residue chain is Endoribonuclease YbeY (154 aa).

3 residues coordinate Zn(2+): H113, H117, and H123.

The protein belongs to the endoribonuclease YbeY family. Zn(2+) serves as cofactor.

It is found in the cytoplasm. Functionally, single strand-specific metallo-endoribonuclease involved in late-stage 70S ribosome quality control and in maturation of the 3' terminus of the 16S rRNA. The chain is Endoribonuclease YbeY from Vibrio cholerae serotype O1 (strain ATCC 39541 / Classical Ogawa 395 / O395).